The sequence spans 147 residues: UPF0735 ACT domain-containing protein RBAM_024960 (147 aa).

The ACT domain occupies 70-145 (TLFFHLEDRS…FIEKVEILGS (76 aa)).

It belongs to the UPF0735 family.

The protein is UPF0735 ACT domain-containing protein RBAM_024960 of Bacillus velezensis (strain DSM 23117 / BGSC 10A6 / LMG 26770 / FZB42) (Bacillus amyloliquefaciens subsp. plantarum).